A 426-amino-acid chain; its full sequence is Histidine--tRNA ligase (426 aa).

It belongs to the class-II aminoacyl-tRNA synthetase family. As to quaternary structure, homodimer.

It is found in the cytoplasm. It carries out the reaction tRNA(His) + L-histidine + ATP = L-histidyl-tRNA(His) + AMP + diphosphate + H(+). The polypeptide is Histidine--tRNA ligase (Streptococcus agalactiae serotype Ia (strain ATCC 27591 / A909 / CDC SS700)).